The primary structure comprises 268 residues: Proteasome subunit beta type-4 (268 aa).

Belongs to the peptidase T1B family. In terms of assembly, the 26S proteasome consists of a 20S proteasome core and two 19S regulatory subunits. The 20S proteasome core is composed of 28 subunits that are arranged in four stacked rings, resulting in a barrel-shaped structure. The two end rings are each formed by seven alpha subunits, and the two central rings are each formed by seven beta subunits. The catalytic chamber with the active sites is on the inside of the barrel.

It is found in the cytoplasm. The protein localises to the nucleus. Non-catalytic component of the proteasome, a multicatalytic proteinase complex which is characterized by its ability to cleave peptides with Arg, Phe, Tyr, Leu, and Glu adjacent to the leaving group at neutral or slightly basic pH. The proteasome has an ATP-dependent proteolytic activity. This is Proteasome subunit beta type-4 (Prosbeta7) from Drosophila melanogaster (Fruit fly).